We begin with the raw amino-acid sequence, 270 residues long: MDTIVTAILLGIVEGLTEFLPVSSTGHLILATELFGYDAHQWAMFNVVIQLGAILAVVVQYWRTFWAVGMGLLRLEPISLRFLRNLLAAFIPSAILGLALKKYIDVLLGSPSVVCWALIAGGIAILVIEKHAKQGEPSGIGQLPLRQAIGVGLAQCLAMVPGVSRSGATIMGALAMGIERRTAAEFSFFLAIPTMLGATTLELLDNRDALLGGTMGVGWSEIGVGFAVSFVVALAVIRLFVAYVSRAGFKPFAWYRIAAGAVALGWLAMR.

Helical transmembrane passes span 3–23 (TIVT…LPVS), 42–62 (WAMF…VQYW), 86–106 (LLAA…YIDV), 108–128 (LGSP…ILVI), 184–204 (AEFS…LELL), 217–237 (VGWS…LAVI), and 249–269 (FKPF…WLAM).

This sequence belongs to the UppP family.

The protein resides in the cell inner membrane. It carries out the reaction di-trans,octa-cis-undecaprenyl diphosphate + H2O = di-trans,octa-cis-undecaprenyl phosphate + phosphate + H(+). In terms of biological role, catalyzes the dephosphorylation of undecaprenyl diphosphate (UPP). Confers resistance to bacitracin. The chain is Undecaprenyl-diphosphatase from Novosphingobium aromaticivorans (strain ATCC 700278 / DSM 12444 / CCUG 56034 / CIP 105152 / NBRC 16084 / F199).